We begin with the raw amino-acid sequence, 260 residues long: 6-carboxyhexanoate--CoA ligase (260 aa).

It belongs to the BioW family. As to quaternary structure, homodimer. Mg(2+) serves as cofactor.

The catalysed reaction is heptanedioate + ATP + CoA = 6-carboxyhexanoyl-CoA + AMP + diphosphate. It functions in the pathway metabolic intermediate metabolism; pimeloyl-CoA biosynthesis; pimeloyl-CoA from pimelate: step 1/1. Catalyzes the transformation of pimelate into pimeloyl-CoA with concomitant hydrolysis of ATP to AMP. The polypeptide is 6-carboxyhexanoate--CoA ligase (Fibrobacter succinogenes (strain ATCC 19169 / S85)).